We begin with the raw amino-acid sequence, 353 residues long: DNA polymerase IV (353 aa).

Positions isoleucine 14–glycine 198 constitute a UmuC domain. Mg(2+)-binding residues include aspartate 18 and aspartate 116. Glutamate 117 is a catalytic residue.

It belongs to the DNA polymerase type-Y family. As to quaternary structure, monomer. The cofactor is Mg(2+).

Its subcellular location is the cytoplasm. The enzyme catalyses DNA(n) + a 2'-deoxyribonucleoside 5'-triphosphate = DNA(n+1) + diphosphate. In terms of biological role, poorly processive, error-prone DNA polymerase involved in untargeted mutagenesis. Copies undamaged DNA at stalled replication forks, which arise in vivo from mismatched or misaligned primer ends. These misaligned primers can be extended by PolIV. Exhibits no 3'-5' exonuclease (proofreading) activity. May be involved in translesional synthesis, in conjunction with the beta clamp from PolIII. The polypeptide is DNA polymerase IV (Streptococcus pneumoniae serotype 4 (strain ATCC BAA-334 / TIGR4)).